The chain runs to 242 residues: Transcriptional activator protein BjaR1 (242 aa).

The 66-residue stretch at 173–238 (TPYPSTRLTP…HAVALAIRHK (66 aa)) folds into the HTH luxR-type domain. The segment at residues 197 to 216 (AWEIGEILHITQRTAEEHLA) is a DNA-binding region (H-T-H motif).

Belongs to the autoinducer-regulated transcriptional regulatory protein family.

In terms of biological role, transcriptional activator that functions in response to the quorum-sensing autoinducer IV-HSL (isovaleryl-homoserine lactone). Activates BjaI expression. Is sensitive to IV-HSL at concentrations as low as 10 pM. This is Transcriptional activator protein BjaR1 (bjaR1) from Bradyrhizobium diazoefficiens (strain JCM 10833 / BCRC 13528 / IAM 13628 / NBRC 14792 / USDA 110).